The primary structure comprises 329 residues: GTPase Obg (329 aa).

Residues Met-1 to Leu-159 form the Obg domain. One can recognise an OBG-type G domain in the interval Ala-160 to Asp-328. Residues Gly-166–Ser-173, Phe-191–Val-195, Asp-213–Gly-216, Asn-280–Asp-283, and Ser-309–Val-311 each bind GTP. Ser-173 and Thr-193 together coordinate Mg(2+).

It belongs to the TRAFAC class OBG-HflX-like GTPase superfamily. OBG GTPase family. As to quaternary structure, monomer. Requires Mg(2+) as cofactor.

The protein resides in the cytoplasm. Its function is as follows. An essential GTPase which binds GTP, GDP and possibly (p)ppGpp with moderate affinity, with high nucleotide exchange rates and a fairly low GTP hydrolysis rate. Plays a role in control of the cell cycle, stress response, ribosome biogenesis and in those bacteria that undergo differentiation, in morphogenesis control. This chain is GTPase Obg, found in Rippkaea orientalis (strain PCC 8801 / RF-1) (Cyanothece sp. (strain PCC 8801)).